Reading from the N-terminus, the 291-residue chain is Pyridoxal 5'-phosphate synthase subunit PdxS (291 aa).

Position 23 (Asp23) interacts with D-ribose 5-phosphate. Catalysis depends on Lys80, which acts as the Schiff-base intermediate with D-ribose 5-phosphate. Gly152 lines the D-ribose 5-phosphate pocket. Arg164 is a D-glyceraldehyde 3-phosphate binding site. Residues Gly213 and 234–235 (GS) each bind D-ribose 5-phosphate.

Belongs to the PdxS/SNZ family. In terms of assembly, in the presence of PdxT, forms a dodecamer of heterodimers.

It catalyses the reaction aldehydo-D-ribose 5-phosphate + D-glyceraldehyde 3-phosphate + L-glutamine = pyridoxal 5'-phosphate + L-glutamate + phosphate + 3 H2O + H(+). It participates in cofactor biosynthesis; pyridoxal 5'-phosphate biosynthesis. Catalyzes the formation of pyridoxal 5'-phosphate from ribose 5-phosphate (RBP), glyceraldehyde 3-phosphate (G3P) and ammonia. The ammonia is provided by the PdxT subunit. Can also use ribulose 5-phosphate and dihydroxyacetone phosphate as substrates, resulting from enzyme-catalyzed isomerization of RBP and G3P, respectively. The sequence is that of Pyridoxal 5'-phosphate synthase subunit PdxS from Haemophilus influenzae (strain ATCC 51907 / DSM 11121 / KW20 / Rd).